The sequence spans 316 residues: Nucleoprotein (316 aa).

The RNA site is built by Y43, Y46, V76, R122, and K240.

This sequence belongs to the tenuiviruses nucleocapsid protein family.

It is found in the virion. The protein resides in the host cytoplasm. In terms of biological role, encapsidates the genome, protecting it from nucleases. The encapsidated genomic RNA is termed the nucleocapsid (NC), and serves as template for viral transcription and replication. The protein is Nucleoprotein of Maize stripe virus (MStV).